Consider the following 47-residue polypeptide: IgA-inducing protein (47 aa).

Residues methionine 1–glycine 24 form the signal peptide.

In terms of tissue distribution, expressed in Peyer patches, spleen, thymus, liver and mesenteric lymph node. Expressed at high levels by dendritic cells, and at lower levels by T-cells, monocytes and B-cells.

The protein resides in the secreted. Its function is as follows. Enhances IgA secretion from B-cells stimulated via CD40. The sequence is that of IgA-inducing protein (IGIP) from Bos taurus (Bovine).